The chain runs to 990 residues: Type III restriction-modification enzyme StyLTI Res subunit (990 aa).

The segment at 50–545 (NIDVKMETGT…GLRLPVDENG (496 aa)) is helicase-like domain. The region spanning 884–970 (LLKYDYPQQV…RQNINVEFAE (87 aa)) is the VRR-NUC domain. An endonuclease domain region spans residues 913-937 (STTPDFVYRIERQDADSVYLLVETK).

The protein belongs to the type III restriction-modification system Res protein family. Contains two different subunits: Res and Mod. Mg(2+) serves as cofactor. Requires S-adenosyl-L-methionine as cofactor.

The enzyme catalyses Endonucleolytic cleavage of DNA to give specific double-stranded fragments with terminal 5'-phosphates.. In terms of biological role, a type III restriction enzyme that recognizes 2 inversely oriented double-stranded sequences 5'-CAGAG-3' and cleaves DNA 25-27 base pairs downstream. After binding to one recognition site undergoes random one-dimensional diffusion along DNA until it collides with a stationary enzyme bound to the second DNA site, which is when DNA cleavage occurs. DNA restriction requires both the Res and Mod subunits. This chain is Type III restriction-modification enzyme StyLTI Res subunit, found in Salmonella typhimurium (strain LT2 / SGSC1412 / ATCC 700720).